The primary structure comprises 293 residues: Tumor necrosis factor receptor superfamily member 13B (293 aa).

Residues 1–165 lie on the Extracellular side of the membrane; it reads MSGLGRSRRG…SADQVALVYS (165 aa). TNFR-Cys repeat units follow at residues 33–67 and 70–104; these read SCPE…AFCR and SCRK…AYFC. Cystine bridges form between Cys34/Cys47, Cys50/Cys62, Cys54/Cys66, Cys71/Cys86, Cys89/Cys100, and Cys93/Cys104. The tract at residues 115 to 146 is disordered; it reads PPELRRQRSGEVENNSDNSGRYQGLEHRGSEA. A compositionally biased stretch (polar residues) spans 126–135; it reads VENNSDNSGR. Asn128 is a glycosylation site (N-linked (GlcNAc...) asparagine). Residues 166–186 traverse the membrane as a helical; Signal-anchor for type III membrane protein segment; it reads TLGLCLCAVLCCFLVAVACFL. At 187–293 the chain is on the cytoplasmic side; the sequence is KKRGDPCSCQ…VPAQEGGPGA (107 aa). Residues 192 to 226 are disordered; sequence PCSCQPRSRPRQSPAKSSQDHAMEAGSPVSTSPEP.

Binds TRAF2, TRAF5 and TRAF6. Binds the NH2-terminal domain of CAMLG with its C-terminus. Highly expressed in spleen, thymus, small intestine and peripheral blood leukocytes. Expressed in resting B-cells and activated T-cells, but not in resting T-cells.

The protein localises to the membrane. Its function is as follows. Receptor for TNFSF13/APRIL and TNFSF13B/TALL1/BAFF/BLYS that binds both ligands with similar high affinity. Mediates calcineurin-dependent activation of NF-AT, as well as activation of NF-kappa-B and AP-1. Involved in the stimulation of B- and T-cell function and the regulation of humoral immunity. This is Tumor necrosis factor receptor superfamily member 13B (TNFRSF13B) from Homo sapiens (Human).